The primary structure comprises 393 residues: NAD(P)H-quinone oxidoreductase subunit H, chloroplastic (393 aa).

This sequence belongs to the complex I 49 kDa subunit family. As to quaternary structure, NDH is composed of at least 16 different subunits, 5 of which are encoded in the nucleus.

Its subcellular location is the plastid. The protein resides in the chloroplast thylakoid membrane. The catalysed reaction is a plastoquinone + NADH + (n+1) H(+)(in) = a plastoquinol + NAD(+) + n H(+)(out). It catalyses the reaction a plastoquinone + NADPH + (n+1) H(+)(in) = a plastoquinol + NADP(+) + n H(+)(out). Functionally, NDH shuttles electrons from NAD(P)H:plastoquinone, via FMN and iron-sulfur (Fe-S) centers, to quinones in the photosynthetic chain and possibly in a chloroplast respiratory chain. The immediate electron acceptor for the enzyme in this species is believed to be plastoquinone. Couples the redox reaction to proton translocation, and thus conserves the redox energy in a proton gradient. The chain is NAD(P)H-quinone oxidoreductase subunit H, chloroplastic from Acorus calamus var. americanus (American sweet flag).